The sequence spans 252 residues: Imidazole glycerol phosphate synthase subunit HisF (252 aa).

Residues aspartate 11 and aspartate 130 contribute to the active site.

Belongs to the HisA/HisF family. Heterodimer of HisH and HisF.

It localises to the cytoplasm. It carries out the reaction 5-[(5-phospho-1-deoxy-D-ribulos-1-ylimino)methylamino]-1-(5-phospho-beta-D-ribosyl)imidazole-4-carboxamide + L-glutamine = D-erythro-1-(imidazol-4-yl)glycerol 3-phosphate + 5-amino-1-(5-phospho-beta-D-ribosyl)imidazole-4-carboxamide + L-glutamate + H(+). It participates in amino-acid biosynthesis; L-histidine biosynthesis; L-histidine from 5-phospho-alpha-D-ribose 1-diphosphate: step 5/9. Functionally, IGPS catalyzes the conversion of PRFAR and glutamine to IGP, AICAR and glutamate. The HisF subunit catalyzes the cyclization activity that produces IGP and AICAR from PRFAR using the ammonia provided by the HisH subunit. This is Imidazole glycerol phosphate synthase subunit HisF from Geobacillus sp. (strain WCH70).